The primary structure comprises 490 residues: GTPase Der (490 aa).

2 consecutive EngA-type G domains span residues 3–166 (PVVA…MDDV) and 203–376 (IKLA…DSST). Residues 9–16 (GRPNVGKS), 56–60 (DTGGI), 118–121 (NKTD), 209–216 (GRPNVGKS), 256–260 (DTAGV), and 321–324 (NKWD) contribute to the GTP site. Residues 377–461 (RRVSTAMLTR…PIRIQFKEGE (85 aa)) enclose the KH-like domain.

The protein belongs to the TRAFAC class TrmE-Era-EngA-EngB-Septin-like GTPase superfamily. EngA (Der) GTPase family. Associates with the 50S ribosomal subunit.

GTPase that plays an essential role in the late steps of ribosome biogenesis. In Salmonella enteritidis PT4 (strain P125109), this protein is GTPase Der.